Consider the following 105-residue polypeptide: Cyclotide vibi-J (105 aa).

Residues 1–9 (AAFALPALA) form the signal peptide. A propeptide spanning residues 10–71 (TSFEKDFITH…KSSNSINALG (62 aa)) is cleaved from the precursor. Residues 72–102 (GTFPCGESCVWIPCISKVIGCACKSKVCYKN) constitute a cross-link (cyclopeptide (Gly-Asn)). Intrachain disulfides connect cysteine 76-cysteine 92, cysteine 80-cysteine 94, and cysteine 85-cysteine 99. A propeptide spanning residues 103-105 (SLA) is cleaved from the precursor.

Post-translationally, this is a cyclic peptide.

In terms of biological role, probably participates in a plant defense mechanism. The protein is Cyclotide vibi-J of Viola biflora (Yellow wood violet).